Reading from the N-terminus, the 234-residue chain is Probable porphobilinogen deaminase (234 aa).

It belongs to the HMBS family.

The enzyme catalyses 4 porphobilinogen + H2O = hydroxymethylbilane + 4 NH4(+). It participates in porphyrin-containing compound metabolism; protoporphyrin-IX biosynthesis; coproporphyrinogen-III from 5-aminolevulinate: step 2/4. Functionally, tetrapolymerization of the monopyrrole PBG into the hydroxymethylbilane pre-uroporphyrinogen in several discrete steps. The sequence is that of Probable porphobilinogen deaminase (hemC) from Chlamydia pneumoniae (Chlamydophila pneumoniae).